A 429-amino-acid chain; its full sequence is Enolase (429 aa).

(2R)-2-phosphoglycerate is bound at residue glutamine 168. Glutamate 210 serves as the catalytic Proton donor. Positions 247, 288, and 315 each coordinate Mg(2+). Residues lysine 340, arginine 369, serine 370, and lysine 391 each coordinate (2R)-2-phosphoglycerate. Lysine 340 (proton acceptor) is an active-site residue.

Belongs to the enolase family. Requires Mg(2+) as cofactor.

The protein resides in the cytoplasm. It is found in the secreted. It localises to the cell surface. The enzyme catalyses (2R)-2-phosphoglycerate = phosphoenolpyruvate + H2O. The protein operates within carbohydrate degradation; glycolysis; pyruvate from D-glyceraldehyde 3-phosphate: step 4/5. Its function is as follows. Catalyzes the reversible conversion of 2-phosphoglycerate (2-PG) into phosphoenolpyruvate (PEP). It is essential for the degradation of carbohydrates via glycolysis. The polypeptide is Enolase (Nostoc punctiforme (strain ATCC 29133 / PCC 73102)).